Here is a 352-residue protein sequence, read N- to C-terminus: MASWPPLELQSSNQSQLFPQNATACDNAPEAWDLLHRVLPTFIISICSFGLLGNLFVLLVFLLPRRRLNVAEIYLANLAASDLVFVLGLPFWAENIWNQFNWPFGALLCRGINGVIKANLFISIFLVVAISQDRYCLLVHPMASRRRQRRRQARVTCVLIWVVGGLLSIPTFLLRSIQAVPDLNITACILLLPHEAWHFARIVELNILAFLLPLAAIVFFNYHILASLRGREEVSRTRCGGRKDSKTTALILTLVVAFLVCWAPYHFFAFLEFLFQVQAIRGCFWEDFIDLGLQLANFLAFTNSSLNPVIYVFVGRLFRTKVWELYKQCTPKSLAPISSSHRKEIFQLFWRN.

The Extracellular segment spans residues 1 to 41 (MASWPPLELQSSNQSQLFPQNATACDNAPEAWDLLHRVLPT). N-linked (GlcNAc...) asparagine glycosylation is found at Asn-13 and Asn-21. Residues 42–62 (FIISICSFGLLGNLFVLLVFL) traverse the membrane as a helical segment. The Cytoplasmic segment spans residues 63–72 (LPRRRLNVAE). Residues 73-93 (IYLANLAASDLVFVLGLPFWA) form a helical membrane-spanning segment. At 94–110 (ENIWNQFNWPFGALLCR) the chain is on the extracellular side. An intrachain disulfide couples Cys-109 to Cys-188. Residues 111-131 (GINGVIKANLFISIFLVVAIS) form a helical membrane-spanning segment. Topologically, residues 132-153 (QDRYCLLVHPMASRRRQRRRQA) are cytoplasmic. Residues 154-174 (RVTCVLIWVVGGLLSIPTFLL) traverse the membrane as a helical segment. The Extracellular portion of the chain corresponds to 175-206 (RSIQAVPDLNITACILLLPHEAWHFARIVELN). A glycan (N-linked (GlcNAc...) asparagine) is linked at Asn-184. Residues 207–227 (ILAFLLPLAAIVFFNYHILAS) form a helical membrane-spanning segment. The Cytoplasmic portion of the chain corresponds to 228 to 250 (LRGREEVSRTRCGGRKDSKTTAL). A helical transmembrane segment spans residues 251-271 (ILTLVVAFLVCWAPYHFFAFL). The Extracellular portion of the chain corresponds to 272–294 (EFLFQVQAIRGCFWEDFIDLGLQ). The chain crosses the membrane as a helical span at residues 295 to 315 (LANFLAFTNSSLNPVIYVFVG). The Cytoplasmic segment spans residues 316 to 352 (RLFRTKVWELYKQCTPKSLAPISSSHRKEIFQLFWRN). Cys-329 carries S-palmitoyl cysteine lipidation.

It belongs to the G-protein coupled receptor 1 family. Bradykinin receptor subfamily. BDKRB1 sub-subfamily.

It is found in the cell membrane. In terms of biological role, this is a receptor for bradykinin. Could be a factor in chronic pain and inflammation. This Chlorocebus aethiops (Green monkey) protein is B1 bradykinin receptor (BDKRB1).